The primary structure comprises 104 residues: uncharacterized protein (104 aa).

2 helical membrane-spanning segments follow: residues 53-73 and 74-94; these read IWGI…NWDF and ILNL…LILI.

The protein localises to the cell membrane. This is an uncharacterized protein from Methanocaldococcus jannaschii (strain ATCC 43067 / DSM 2661 / JAL-1 / JCM 10045 / NBRC 100440) (Methanococcus jannaschii).